The chain runs to 287 residues: ATP synthase gamma chain (287 aa).

It belongs to the ATPase gamma chain family. In terms of assembly, F-type ATPases have 2 components, CF(1) - the catalytic core - and CF(0) - the membrane proton channel. CF(1) has five subunits: alpha(3), beta(3), gamma(1), delta(1), epsilon(1). CF(0) has three main subunits: a, b and c.

The protein resides in the cell inner membrane. Functionally, produces ATP from ADP in the presence of a proton gradient across the membrane. The gamma chain is believed to be important in regulating ATPase activity and the flow of protons through the CF(0) complex. In Alkalilimnicola ehrlichii (strain ATCC BAA-1101 / DSM 17681 / MLHE-1), this protein is ATP synthase gamma chain.